Here is a 354-residue protein sequence, read N- to C-terminus: Protein RecA (354 aa).

ATP is bound at residue 67-74 (GPESSGKT).

It belongs to the RecA family.

It localises to the cytoplasm. Functionally, can catalyze the hydrolysis of ATP in the presence of single-stranded DNA, the ATP-dependent uptake of single-stranded DNA by duplex DNA, and the ATP-dependent hybridization of homologous single-stranded DNAs. It interacts with LexA causing its activation and leading to its autocatalytic cleavage. The protein is Protein RecA of Yersinia enterocolitica serotype O:8 / biotype 1B (strain NCTC 13174 / 8081).